The following is a 37-amino-acid chain: Potassium channel toxin alpha-KTx 15.3 (37 aa).

Pyrrolidone carboxylic acid is present on glutamine 1. 3 cysteine pairs are disulfide-bonded: cysteine 8-cysteine 28, cysteine 13-cysteine 33, and cysteine 17-cysteine 35.

In terms of tissue distribution, expressed by the venom gland.

The protein localises to the secreted. Its function is as follows. Inhibits A-type (Kv4) voltage-gated potassium channels of striated neurons (Ki=131 nM), probably by acting as a pore blocker. Has also been shown to block ERG1/Kv11.1/KCNH2 potassium channels (IC(50)=7.9 uM). The presence of the Kv4-associated proteins DPP6 or DPP10 is mandatory to have high-affinity blockade of Kv4.2/KCND2 and Kv4.3/KCND3 channels (80-90% inhibition at 500 nM of toxin). In contrast, the presence of the Kv4-associated protein KChIP1/KCNIP1 does not enhance the affinity blockade (only 40% inhibition at 500 nM). In adult rat brain, the toxin binds to sites in the striatum, and cerebellum. It shares the same target in rat brain than AaTX1 (AC Q867F4) and BmTX3 (AC Q8I0L5). In DPP6 knockout mice, A-type currents are about 20-fold less affected by the toxin. In rodent models of Parkinson's disease, the toxin reduces motor symptoms and emotional and cognitive symptoms. The polypeptide is Potassium channel toxin alpha-KTx 15.3 (Androctonus mauritanicus mauritanicus (Scorpion)).